The chain runs to 455 residues: UPF0210 protein Teth514_2074 (455 aa).

Belongs to the UPF0210 family. Homodimer.

The sequence is that of UPF0210 protein Teth514_2074 from Thermoanaerobacter sp. (strain X514).